The sequence spans 328 residues: MKLGELELREEWQDEEFPRLLPEEPGSPGDPEDPQRGSQAGTPSSLALCGQRPMRKRLSAPEWQLSLTEGTGENGASPTRSASSSSAGSLDLEVDELETPSDSEQLDSGHEFEWEDDLPRAEGLGASEAAERLGRGCVCDVAGEDGHRWRVFRTGQREQRVDMTIIEPYKKVLSHGGYHGDGLNAVILFASCYLPRSSIPNYTYIMEHLFRYMVGTLELLVAENYLLVHLSGGTSRAQVPPLSWIRQCYRTLDRRLRKNLRALVVVHATWYVKAFLALVRPFISSKFTRKIRFLDSLGELAQLISLEQVHIPEVVRQLDRDLHGSKGT.

The span at 1–22 (MKLGELELREEWQDEEFPRLLP) shows a compositional bias: basic and acidic residues. The segment at 1–116 (MKLGELELRE…DSGHEFEWED (116 aa)) is disordered. Residues 36-45 (RGSQAGTPSS) are compositionally biased toward polar residues. The segment covering 76 to 89 (ASPTRSASSSSAGS) has biased composition (low complexity). Positions 92–105 (LEVDELETPSDSEQ) are enriched in acidic residues. Over residues 107-116 (DSGHEFEWED) the composition is skewed to basic and acidic residues. The 162-residue stretch at 162-323 (DMTIIEPYKK…VVRQLDRDLH (162 aa)) folds into the CRAL-TRIO domain.

In terms of assembly, homodimer. Interacts with BCL2, ARHGAP1, MIF and GFER.

Its function is as follows. May be a bridge molecule between BCL2 and ARHGAP1/CDC42 in promoting cell death. The chain is Bcl-2/adenovirus E1B 19 kDa-interacting protein 2-like protein (Bnipl) from Mus musculus (Mouse).